The sequence spans 298 residues: 5,10-methylenetetrahydrofolate reductase (298 aa).

Residue Glu-28 is the Proton donor/acceptor of the active site. Thr-59 is an NADH binding site. Tyr-60, Ala-62, His-88, Arg-118, Gly-119, Asp-120, Ala-132, Tyr-152, His-156, Ala-159, Asp-165, Asn-168, and Lys-172 together coordinate FAD. A (6S)-5-methyl-5,6,7,8-tetrahydrofolate-binding site is contributed by Asp-120. Gln-183 is a binding site for NADH. 3 residues coordinate (6S)-5-methyl-5,6,7,8-tetrahydrofolate: Gln-183, Gln-219, and Arg-279.

The protein belongs to the methylenetetrahydrofolate reductase family. It depends on FAD as a cofactor.

The enzyme catalyses (6S)-5-methyl-5,6,7,8-tetrahydrofolate + NAD(+) = (6R)-5,10-methylene-5,6,7,8-tetrahydrofolate + NADH + H(+). It functions in the pathway one-carbon metabolism; tetrahydrofolate interconversion. Its pathway is amino-acid biosynthesis; L-methionine biosynthesis via de novo pathway. In terms of biological role, catalyzes the NADH-dependent reduction of 5,10-methylenetetrahydrofolate to 5-methyltetrahydrofolate. Is required to provide the methyl group necessary for methionine synthetase to convert homocysteine to methionine; the methyl group is given by 5-methyltetrahydrofolate. This is 5,10-methylenetetrahydrofolate reductase (metF) from Pectobacterium carotovorum subsp. carotovorum (Erwinia carotovora subsp. carotovora).